The following is a 369-amino-acid chain: Flagellar P-ring protein (369 aa).

An N-terminal signal peptide occupies residues M1 to A22.

This sequence belongs to the FlgI family. As to quaternary structure, the basal body constitutes a major portion of the flagellar organelle and consists of four rings (L,P,S, and M) mounted on a central rod.

The protein resides in the periplasm. It is found in the bacterial flagellum basal body. In terms of biological role, assembles around the rod to form the L-ring and probably protects the motor/basal body from shearing forces during rotation. This chain is Flagellar P-ring protein, found in Pseudomonas putida (strain ATCC 47054 / DSM 6125 / CFBP 8728 / NCIMB 11950 / KT2440).